The following is a 282-amino-acid chain: Orotidine 5'-phosphate decarboxylase (282 aa).

Catalysis depends on Lys-95, which acts as the Proton donor.

It belongs to the OMP decarboxylase family. Type 2 subfamily.

It carries out the reaction orotidine 5'-phosphate + H(+) = UMP + CO2. It participates in pyrimidine metabolism; UMP biosynthesis via de novo pathway; UMP from orotate: step 2/2. The protein is Orotidine 5'-phosphate decarboxylase (pyrF) of Mycobacterium leprae (strain TN).